The following is a 341-amino-acid chain: MIDQNKLITKWKKAFAKAKNLTTLVNLKNTLHNSDLKPLLQKIKTATKLSEKSSLGKLYQSLDIQLTDLLTSYKKTFEINNQVSQKPSLDVMLPATEFTNGSNNALYQVIDNLVEYFKSFLFTINFDSELTSISDCFDLLNIPKDHSSRNESDSFYIDKTSLLRTHCTATTLKAVRTSKKTNNPDIRVVSLGAVFRNDSDDATHSHQFTQLDFMWIKKGLSLANLKWFINNMITHFFGENTFTRFRLSHFPFTEPSFEIDIRCWLCQNGCSICKQTKWIEILGAGIIHPQVMNNMGIGDTENITGIAAGIGIERLAMLKYGIDDIRDFYDNNFKFLTQFTD.

Position 254 (E254) interacts with Mg(2+).

This sequence belongs to the class-II aminoacyl-tRNA synthetase family. Phe-tRNA synthetase alpha subunit type 1 subfamily. Tetramer of two alpha and two beta subunits. Mg(2+) serves as cofactor.

Its subcellular location is the cytoplasm. The catalysed reaction is tRNA(Phe) + L-phenylalanine + ATP = L-phenylalanyl-tRNA(Phe) + AMP + diphosphate + H(+). The chain is Phenylalanine--tRNA ligase alpha subunit (pheS) from Mycoplasma genitalium (strain ATCC 33530 / DSM 19775 / NCTC 10195 / G37) (Mycoplasmoides genitalium).